A 478-amino-acid polypeptide reads, in one-letter code: Zinc metalloproteinase/disintegrin (478 aa).

An N-terminal signal peptide occupies residues 1 to 20 (MIQVLLVTICLAAFPYQGSS). A propeptide spanning residues 21-188 (IILESGNVND…PIKKVSQLNL (168 aa)) is cleaved from the precursor. Positions 194–391 (RHVDIVVVVD…QNPQCILNKP (198 aa)) constitute a Peptidase M12B domain. An intrachain disulfide couples C207 to C248. N-linked (GlcNAc...) (complex) asparagine glycosylation occurs at N279. Cystine bridges form between C305–C386, C345–C370, and C347–C353. A Zn(2+)-binding site is contributed by H330. E331 is a catalytic residue. Positions 334 and 340 each coordinate Zn(2+). An N-linked (GlcNAc...) (complex) asparagine glycan is attached at N369. Positions 392–407 (LRTVSIPVSGNEHLEA) are excised as a propeptide. Residues 397 to 478 (IPVSGNEHLE…ADCPRYHSHA (82 aa)) enclose the Disintegrin domain. 6 disulfides stabilise this stretch: C411–C426, C413–C421, C420–C443, C434–C440, C439–C464, and C452–C471. A Cell attachment site motif is present at residues 456 to 458 (RGD). Residues 476 to 478 (SHA) constitute a propeptide that is removed on maturation.

This sequence belongs to the venom metalloproteinase (M12B) family. P-II subfamily. P-IIa sub-subfamily. In terms of assembly, monomeric (disintegrin). Zn(2+) serves as cofactor. Post-translationally, glycans are composed of 4 GlcNAc, 3 Man, 2 Gal, 2 NeuAC and 1 Fuc residue. As to expression, expressed by the venom gland.

It localises to the secreted. Its function is as follows. Impairs hemostasis in the envenomed animal. Functionally, inhibits platelet aggregation induced by ADP, thrombin, platelet-activating factor and collagen. Acts by inhibiting fibrinogen interaction with platelet receptors alpha-IIb/beta-3 (ITGA2B/ITGB3). This chain is Zinc metalloproteinase/disintegrin, found in Calloselasma rhodostoma (Malayan pit viper).